A 263-amino-acid chain; its full sequence is Ribosomal RNA small subunit methyltransferase A (263 aa).

Asn20, Leu22, Gly47, Glu68, Asp90, and Asn111 together coordinate S-adenosyl-L-methionine.

It belongs to the class I-like SAM-binding methyltransferase superfamily. rRNA adenine N(6)-methyltransferase family. RsmA subfamily.

The protein resides in the cytoplasm. It catalyses the reaction adenosine(1518)/adenosine(1519) in 16S rRNA + 4 S-adenosyl-L-methionine = N(6)-dimethyladenosine(1518)/N(6)-dimethyladenosine(1519) in 16S rRNA + 4 S-adenosyl-L-homocysteine + 4 H(+). Functionally, specifically dimethylates two adjacent adenosines (A1518 and A1519) in the loop of a conserved hairpin near the 3'-end of 16S rRNA in the 30S particle. May play a critical role in biogenesis of 30S subunits. In Chlorobium chlorochromatii (strain CaD3), this protein is Ribosomal RNA small subunit methyltransferase A.